We begin with the raw amino-acid sequence, 1215 residues long: DNA-directed RNA polymerase subunit beta' (1215 aa).

4 residues coordinate Zn(2+): cysteine 60, cysteine 62, cysteine 75, and cysteine 78. Mg(2+) contacts are provided by aspartate 449, aspartate 451, and aspartate 453. The Zn(2+) site is built by cysteine 818, cysteine 892, cysteine 899, and cysteine 902.

Belongs to the RNA polymerase beta' chain family. As to quaternary structure, the RNAP catalytic core consists of 2 alpha, 1 beta, 1 beta' and 1 omega subunit. When a sigma factor is associated with the core the holoenzyme is formed, which can initiate transcription. Mg(2+) serves as cofactor. Zn(2+) is required as a cofactor.

The enzyme catalyses RNA(n) + a ribonucleoside 5'-triphosphate = RNA(n+1) + diphosphate. DNA-dependent RNA polymerase catalyzes the transcription of DNA into RNA using the four ribonucleoside triphosphates as substrates. This is DNA-directed RNA polymerase subunit beta' from Limosilactobacillus fermentum (strain NBRC 3956 / LMG 18251) (Lactobacillus fermentum).